We begin with the raw amino-acid sequence, 323 residues long: Mas-related G-protein coupled receptor member B4 (323 aa).

The Extracellular portion of the chain corresponds to Met-1 to Asn-34. Asn-11 carries N-linked (GlcNAc...) asparagine glycosylation. Residues Phe-35 to Leu-55 traverse the membrane as a helical segment. At Gly-56 to Ala-63 the chain is on the cytoplasmic side. Residues Phe-64–Val-84 form a helical membrane-spanning segment. Residues Tyr-85 to Phe-98 are Extracellular-facing. Residues Tyr-99–Ile-119 traverse the membrane as a helical segment. Topologically, residues Ser-120–Ala-147 are cytoplasmic. The helical transmembrane segment at Leu-148–Phe-168 threads the bilayer. Topologically, residues Ser-169 to Asn-180 are extracellular. Residues Phe-181–Leu-201 form a helical membrane-spanning segment. The Cytoplasmic portion of the chain corresponds to Leu-202–Thr-224. The helical transmembrane segment at Val-225–Ile-245 threads the bilayer. Topologically, residues His-246–Glu-255 are extracellular. A helical membrane pass occupies residues Met-256 to Gly-276. Residues Ser-277–Ser-323 are Cytoplasmic-facing. The tract at residues Asp-298–Ser-323 is disordered. The segment covering Lys-312–Ser-323 has biased composition (basic and acidic residues).

The protein belongs to the G-protein coupled receptor 1 family. Mas subfamily. In terms of tissue distribution, expressed strongly in newborn dorsal root ganglia, adult dorsal root ganglia and trigeminal ganlia.

Its subcellular location is the membrane. Its function is as follows. Orphan receptor. Probably involved in the function of nociceptive neurons. May regulate nociceptor function and/or development, including the sensation or modulation of pain. The polypeptide is Mas-related G-protein coupled receptor member B4 (Mrgprb4) (Rattus norvegicus (Rat)).